A 380-amino-acid polypeptide reads, in one-letter code: Cytochrome b (380 aa).

4 consecutive transmembrane segments (helical) span residues 34-54 (FGSL…FLAM), 78-99 (WLLR…YFHI), 114-134 (WNIG…GYVL), and 179-199 (FFTF…IHLL). Positions 84 and 98 each coordinate heme b. The heme b site is built by histidine 183 and histidine 197. Histidine 202 contacts a ubiquinone. 4 consecutive transmembrane segments (helical) span residues 227–247 (YKDL…STFA), 289–309 (LGGV…PIIH), 321–341 (IAKT…WIGG), and 348–368 (FITI…LLIP).

This sequence belongs to the cytochrome b family. As to quaternary structure, the cytochrome bc1 complex contains 3 respiratory subunits (MT-CYB, CYC1 and UQCRFS1), 2 core proteins (UQCRC1 and UQCRC2) and probably 6 low-molecular weight proteins. Heme b serves as cofactor.

The protein resides in the mitochondrion inner membrane. Functionally, component of the ubiquinol-cytochrome c reductase complex (complex III or cytochrome b-c1 complex) that is part of the mitochondrial respiratory chain. The b-c1 complex mediates electron transfer from ubiquinol to cytochrome c. Contributes to the generation of a proton gradient across the mitochondrial membrane that is then used for ATP synthesis. The sequence is that of Cytochrome b (mt-cyb) from Rana amurensis (Siberian wood frog).